A 349-amino-acid polypeptide reads, in one-letter code: Methylglutaconyl-CoA hydratase 1, mitochondrial (349 aa).

The N-terminal 37 residues, Met1–Tyr37, are a transit peptide targeting the mitochondrion.

It belongs to the enoyl-CoA hydratase/isomerase family. As to quaternary structure, homohexamer.

The protein resides in the mitochondrion. It carries out the reaction (3S)-3-hydroxy-3-methylglutaryl-CoA = 3-methyl-(2E)-glutaconyl-CoA + H2O. It functions in the pathway amino-acid degradation; L-leucine degradation; (S)-3-hydroxy-3-methylglutaryl-CoA from 3-isovaleryl-CoA: step 3/3. Its function is as follows. 3-methylglutaconyl-CoA hydratase that catalyzes the fifth step in the leucine degradation pathway, the reversible hydration of 3-methylglutaconyl-CoA (3-MG-CoA) to 3-hydroxy-3-methylglutaryl-CoA (HMG-CoA). Involved in vegetative growth, conidiation and in the stress response. Controls mitochondrial morphology and mitophagy, which are critical for the infectious growth of the pathogen. This chain is Methylglutaconyl-CoA hydratase 1, mitochondrial, found in Pyricularia oryzae (strain 70-15 / ATCC MYA-4617 / FGSC 8958) (Rice blast fungus).